A 248-amino-acid chain; its full sequence is 1-(5-phosphoribosyl)-5-[(5-phosphoribosylamino)methylideneamino] imidazole-4-carboxamide isomerase (248 aa).

Residue Asp-8 is the Proton acceptor of the active site. The active-site Proton donor is Asp-130.

This sequence belongs to the HisA/HisF family.

The protein resides in the cytoplasm. It carries out the reaction 1-(5-phospho-beta-D-ribosyl)-5-[(5-phospho-beta-D-ribosylamino)methylideneamino]imidazole-4-carboxamide = 5-[(5-phospho-1-deoxy-D-ribulos-1-ylimino)methylamino]-1-(5-phospho-beta-D-ribosyl)imidazole-4-carboxamide. It participates in amino-acid biosynthesis; L-histidine biosynthesis; L-histidine from 5-phospho-alpha-D-ribose 1-diphosphate: step 4/9. This is 1-(5-phosphoribosyl)-5-[(5-phosphoribosylamino)methylideneamino] imidazole-4-carboxamide isomerase from Alkalilimnicola ehrlichii (strain ATCC BAA-1101 / DSM 17681 / MLHE-1).